Here is a 468-residue protein sequence, read N- to C-terminus: UDP-N-acetylmuramate--L-alanine ligase (468 aa).

116 to 122 serves as a coordination point for ATP; it reads GTHGKTT.

This sequence belongs to the MurCDEF family.

It is found in the cytoplasm. The enzyme catalyses UDP-N-acetyl-alpha-D-muramate + L-alanine + ATP = UDP-N-acetyl-alpha-D-muramoyl-L-alanine + ADP + phosphate + H(+). Its pathway is cell wall biogenesis; peptidoglycan biosynthesis. In terms of biological role, cell wall formation. The protein is UDP-N-acetylmuramate--L-alanine ligase of Fusobacterium nucleatum subsp. nucleatum (strain ATCC 25586 / DSM 15643 / BCRC 10681 / CIP 101130 / JCM 8532 / KCTC 2640 / LMG 13131 / VPI 4355).